A 118-amino-acid polypeptide reads, in one-letter code: MTNIIETVDLTDLVGLCATDDVAEGEILRVKLPSGHALAIYCVNGEFFATDDICSHGEASLSEDGSLDGYEVECSWHFGRFDIRTGHACAMPCEHPLRSWPVTVEGGQIFVDVGAHPV.

Residues 14-111 (VGLCATDDVA…VTVEGGQIFV (98 aa)) enclose the Rieske domain. C54, H56, C74, and H77 together coordinate [2Fe-2S] cluster.

It belongs to the bacterial ring-hydroxylating dioxygenase ferredoxin component family. As to quaternary structure, the p-cumate 2,3-dioxygenase multicomponent enzyme system is composed of an electron transfer component and a dioxygenase component (iron sulfur protein (ISP)). The electron transfer component is composed of a ferredoxin reductase (CmtAa) and a ferredoxin (CmtAd), and the dioxygenase component is formed of a large alpha subunit (CmtAb) and a small beta subunit (CmtAc). It depends on [2Fe-2S] cluster as a cofactor.

It participates in aromatic compound metabolism; p-cumate degradation; acetaldehyde and pyruvate from p-cumate. Its function is as follows. Component of the p-cumate 2,3-dioxygenase multicomponent enzyme system which catalyzes the incorporation of both atoms of molecular oxygen into p-cumate to form cis-2,3-dihydroxy-2,3-dihydro-p-cumate. Functions as an intermediate electron transfer protein via a specific interaction with iron sulfur protein components (ISP)(CmtAb and CmtAc). The polypeptide is p-cumate 2,3-dioxygenase system, ferredoxin component (Pseudomonas putida (Arthrobacter siderocapsulatus)).